A 201-amino-acid polypeptide reads, in one-letter code: Small ribosomal subunit protein uS4 (201 aa).

The segment at 26–46 (LARRAYAPGDHGRDRRGKLSE) is disordered. Positions 35-44 (DHGRDRRGKL) are enriched in basic and acidic residues. The S4 RNA-binding domain occupies 93 to 156 (RRLDNMVYRL…KNLDIIKNAV (64 aa)).

This sequence belongs to the universal ribosomal protein uS4 family. Part of the 30S ribosomal subunit. Contacts protein S5. The interaction surface between S4 and S5 is involved in control of translational fidelity.

In terms of biological role, one of the primary rRNA binding proteins, it binds directly to 16S rRNA where it nucleates assembly of the body of the 30S subunit. Functionally, with S5 and S12 plays an important role in translational accuracy. The chain is Small ribosomal subunit protein uS4 from Limosilactobacillus reuteri (strain DSM 20016) (Lactobacillus reuteri).